The sequence spans 542 residues: CTP synthase (542 aa).

An amidoligase domain region spans residues 1 to 265; the sequence is MARYIFITGG…DDEVLAAFGL (265 aa). A CTP-binding site is contributed by serine 13. Serine 13 contributes to the UTP binding site. 14–19 contacts ATP; the sequence is SLGKGL. Tyrosine 54 serves as a coordination point for L-glutamine. Aspartate 71 provides a ligand contact to ATP. Mg(2+)-binding residues include aspartate 71 and glutamate 139. CTP is bound by residues 146–148, 186–191, and lysine 222; these read DIE and KTKPTQ. Residues 186-191 and lysine 222 each bind UTP; that span reads KTKPTQ. 238–240 provides a ligand contact to ATP; sequence RDA. Positions 290-541 constitute a Glutamine amidotransferase type-1 domain; it reads TIAIVGKYTG…IQAAVVQSRL (252 aa). An L-glutamine-binding site is contributed by glycine 352. The Nucleophile; for glutamine hydrolysis role is filled by cysteine 379. L-glutamine-binding positions include 380-383, glutamate 403, and arginine 469; that span reads FGMQ. Active-site residues include histidine 514 and glutamate 516.

Belongs to the CTP synthase family. In terms of assembly, homotetramer.

It carries out the reaction UTP + L-glutamine + ATP + H2O = CTP + L-glutamate + ADP + phosphate + 2 H(+). It catalyses the reaction L-glutamine + H2O = L-glutamate + NH4(+). The catalysed reaction is UTP + NH4(+) + ATP = CTP + ADP + phosphate + 2 H(+). Its pathway is pyrimidine metabolism; CTP biosynthesis via de novo pathway; CTP from UDP: step 2/2. Its activity is regulated as follows. Allosterically activated by GTP, when glutamine is the substrate; GTP has no effect on the reaction when ammonia is the substrate. The allosteric effector GTP functions by stabilizing the protein conformation that binds the tetrahedral intermediate(s) formed during glutamine hydrolysis. Inhibited by the product CTP, via allosteric rather than competitive inhibition. Catalyzes the ATP-dependent amination of UTP to CTP with either L-glutamine or ammonia as the source of nitrogen. Regulates intracellular CTP levels through interactions with the four ribonucleotide triphosphates. The polypeptide is CTP synthase (Nitrobacter hamburgensis (strain DSM 10229 / NCIMB 13809 / X14)).